A 21-amino-acid chain; its full sequence is Peptide PGLa-R3 (21 aa).

Leu21 is subject to Leucine amide.

Expressed by the skin glands.

The protein resides in the secreted. Its function is as follows. Antimicrobial peptide. The protein is Peptide PGLa-R3 of Xenopus ruwenzoriensis (Uganda clawed frog).